A 128-amino-acid polypeptide reads, in one-letter code: Small ribosomal subunit protein eS6 (128 aa).

It belongs to the eukaryotic ribosomal protein eS6 family.

This is Small ribosomal subunit protein eS6 from Thermoplasma volcanium (strain ATCC 51530 / DSM 4299 / JCM 9571 / NBRC 15438 / GSS1).